The following is a 191-amino-acid chain: MVRKYRKAKGIVEAGVSSTYMQLRSRRIVYVRSEKSSSVSVVGDNGVSSSCSGSNEYKKKELIHLEEEDKDGDTETSTYRRGTKRKLFENLREEEKEELSKSMENYSSEFESAVKESLDCCCSGRKTMEETVTAEEEEKAKLMTEMPTESEIEDFFVEAEKQLKEKFKKKYNFDFEKEKPLEGRYEWVKLE.

The disordered stretch occupies residues 62-81; sequence LIHLEEEDKDGDTETSTYRR. Residues 162–191 are required for inhibitory function and interaction with CDK kinase complexes; the sequence is QLKEKFKKKYNFDFEKEKPLEGRYEWVKLE.

The protein belongs to the CDI family. ICK/KRP subfamily. In terms of assembly, specifically interacts with CDKA-1, but not with CDKB1-1. Interacts with CYCD2-1 and CYCD3-1. Post-translationally, ubiquitinated independently by RKP and SCF (SKP1-CUL1-FBL5/SKP2B) protein ligase complex, leading to proteasomal degradation. Expressed at low levels in roots, stems, leaves and flowers.

It is found in the nucleus. The protein localises to the nucleoplasm. Functionally, binds and inhibits CYCD2-1/CDKA-1 kinase complex activity. Regulates cell division which is crucial for plant growth, development and morphogenesis. Functions in turning cells from a mitotic to an endoreplicating cell cycle mode. Acts cell- and non-cell-autonomously to regulate endoreduplication by allowing S phase progression, but blocking entry into mitosis. Keeps on the one hand the plant cell cycle locally controlled, and on the other hand provides a possibility of linking cell cycle control in single cells with the supracellular organization of a tissue or an organ. May target specifically CDKA-1. The protein is Cyclin-dependent kinase inhibitor 1 (KRP1) of Arabidopsis thaliana (Mouse-ear cress).